Consider the following 267-residue polypeptide: tRNA (guanine-N(1)-)-methyltransferase (267 aa).

S-adenosyl-L-methionine is bound by residues G112 and 131–136 (IGDYIL). Residues 245-259 (DRRKEKNSYEDEFNR) show a composition bias toward basic and acidic residues. Residues 245–267 (DRRKEKNSYEDEFNRRNYKRSTS) are disordered.

Belongs to the RNA methyltransferase TrmD family. As to quaternary structure, homodimer.

The protein localises to the cytoplasm. It catalyses the reaction guanosine(37) in tRNA + S-adenosyl-L-methionine = N(1)-methylguanosine(37) in tRNA + S-adenosyl-L-homocysteine + H(+). Specifically methylates guanosine-37 in various tRNAs. The chain is tRNA (guanine-N(1)-)-methyltransferase from Spiroplasma kunkelii.